Reading from the N-terminus, the 90-residue chain is Small ribosomal subunit protein bS16 (90 aa).

Belongs to the bacterial ribosomal protein bS16 family.

The sequence is that of Small ribosomal subunit protein bS16 from Streptococcus pneumoniae serotype 19F (strain G54).